A 165-amino-acid chain; its full sequence is MQLKFDHDLVLNQESINRIKEFSHSICSIDDIKKHGGRIITVGDVTTENLERAGLDIFIEVVDLKTKRGEKTYNHRENSISIENRPGTISLSLIRAIESSIKSNKKTRIEINGEEDLAVIPIIFYGDINTLVVYGVPDTGMACIFINTEIKSMVTDILRDLNGKT.

6 residues coordinate GTP: D44, V45, D63, K65, E115, and D138.

Belongs to the GTP-dependent DPCK family.

It catalyses the reaction 3'-dephospho-CoA + GTP = GDP + CoA + H(+). It functions in the pathway cofactor biosynthesis; coenzyme A biosynthesis. Its function is as follows. Catalyzes the GTP-dependent phosphorylation of the 3'-hydroxyl group of dephosphocoenzyme A to form coenzyme A (CoA). The polypeptide is GTP-dependent dephospho-CoA kinase (Picrophilus torridus (strain ATCC 700027 / DSM 9790 / JCM 10055 / NBRC 100828 / KAW 2/3)).